A 720-amino-acid chain; its full sequence is Phenylalanine--tRNA ligase beta subunit, chloroplastic (720 aa).

Positions Asn319 to Ser404 constitute a B5 domain. Mg(2+)-binding residues include Asp382, Asp388, Glu391, and Glu392. The region spanning Ser626–Arg719 is the FDX-ACB domain.

This sequence belongs to the phenylalanyl-tRNA synthetase beta subunit family. Type 1 subfamily. As to quaternary structure, tetramer of two alpha and two beta subunits. Requires Mg(2+) as cofactor.

It localises to the plastid. The protein resides in the chloroplast. It carries out the reaction tRNA(Phe) + L-phenylalanine + ATP = L-phenylalanyl-tRNA(Phe) + AMP + diphosphate + H(+). This chain is Phenylalanine--tRNA ligase beta subunit, chloroplastic (pheT), found in Porphyra purpurea (Red seaweed).